A 156-amino-acid polypeptide reads, in one-letter code: Ribonuclease ageritin (156 aa).

Residues Met1–Met21 form the signal peptide. His98 is a catalytic residue. Residues Asn100 and Asn139 are each glycosylated (N-linked (GlcNAc...) asparagine).

It belongs to the ribotoxin-like family. As to quaternary structure, monomer. It depends on Mg(2+) as a cofactor.

It localises to the vacuole lumen. The enzyme catalyses a 28S rRNA containing guanosine-adenosine pair + H2O = an [RNA fragment]-3'-adenosine-3'-phosphate + a 5'-a hydroxy-guanosine-3'-[RNA fragment].. With respect to regulation, in contrast to most ribotoxins, activity is completely inhibited by EDTA. Fungal ribonuclease involved in fungal defense. Highly specific and highly toxic fungal endonuclease that cleaves a single phosphodiester bond in the 28S RNA of eukaryotic ribosomes at a universally conserved GAGA tetraloop of the sarcin-ricin loop (SRL). The damage of the SRL inhibits the binding of translation elongation factors and halts protein biosynthesis, ultimately resulting in the death of the target cells. Shows antitumor activity. Exerts cytotoxicity and induces apoptosis towards rat glial cells and human glioma cells, and also displays some activity towards human neurolastoma cell lines. Shows a strong entomotoxicity against Aedes aegypti larvae, yet no nematotoxicity against nematodes. In Cyclocybe aegerita (Black poplar mushroom), this protein is Ribonuclease ageritin.